A 340-amino-acid polypeptide reads, in one-letter code: Organic solute transporter subunit alpha (340 aa).

The Extracellular segment spans residues 1 to 48 (MEPGRTQIKLDPRYTADLLEVLKTNYGIPSACFSQPPTAAQLLRALGP). The chain crosses the membrane as a helical span at residues 49–69 (VELALTSILTLLALGSIAIFL). Over 70–87 (EDAVYLYKNTLCPIKRRT) the chain is Cytoplasmic. Residues 88-108 (LLWKSSAPTVVSVLCCFGLWI) traverse the membrane as a helical segment. Residues 109–118 (PRSLVLVEMT) are Extracellular-facing. The helical transmembrane segment at 119 to 139 (ITSFYAVCFYLLMLVMVEGFG) threads the bilayer. Residues 140–181 (GKEAVLRTLRDTPMMVHTGPCCCCCPCCPRLLLTRKKLQLLM) are Cytoplasmic-facing. Residues 182-202 (LGPFQYAFLKITLTLVGLFLV) traverse the membrane as a helical segment. The Extracellular segment spans residues 203–218 (PDGIYDPADISEGSTA). A helical transmembrane segment spans residues 219–239 (LWINTFLGVSTLLALWTLGII). Topologically, residues 240–255 (SRQARLHLGEQNMGAK) are cytoplasmic. Residues 256–276 (FALFQVLLILTALQPSIFSVL) form a helical membrane-spanning segment. The Extracellular portion of the chain corresponds to 277–294 (ANGGQIACSPPYSSKTRS). A helical membrane pass occupies residues 295 to 317 (QVMNCHLLILETFLMTVLTRMYY). Residues 318–340 (RRKDHKVGYETFSSPDLDLNLKA) lie on the Cytoplasmic side of the membrane. Serine 330 is modified (phosphoserine).

This sequence belongs to the OST-alpha family. In terms of assembly, interacts with SLC51B. The Ost-alpha/Ost-beta complex is a heterodimer composed of alpha (SLC51A) and beta (SLC51B) subunit. As to expression, widely expressed with a high expression in ileum. Expressed in testis, colon, liver, small intestine, kidney, ovary and adrenal gland; and at low levels in heart, lung, brain, pituitary, thyroid gland, uterus, prostate, mammary gland and fat.

It localises to the cell membrane. It is found in the endoplasmic reticulum membrane. It carries out the reaction taurocholate(out) = taurocholate(in). The catalysed reaction is estrone 3-sulfate(out) = estrone 3-sulfate(in). It catalyses the reaction dehydroepiandrosterone 3-sulfate(out) = dehydroepiandrosterone 3-sulfate(in). The enzyme catalyses tauroursodeoxycholate(out) = tauroursodeoxycholate(in). It carries out the reaction glycoursodeoxycholate(out) = glycoursodeoxycholate(in). The catalysed reaction is glycocholate(out) = glycocholate(in). It catalyses the reaction taurochenodeoxycholate(out) = taurochenodeoxycholate(in). The enzyme catalyses glycochenodeoxycholate(out) = glycochenodeoxycholate(in). It carries out the reaction taurodeoxycholate(out) = taurodeoxycholate(in). The catalysed reaction is glycodeoxycholate(out) = glycodeoxycholate(in). It catalyses the reaction prostaglandin E2(out) = prostaglandin E2(in). Functionally, essential component of the Ost-alpha/Ost-beta complex, a heterodimer that acts as the intestinal basolateral transporter responsible for bile acid export from enterocytes into portal blood. Efficiently transports the major species of bile acids (taurocholate). Taurine conjugates are transported more efficiently across the basolateral membrane than glycine-conjugated bile acids. Can also transport steroids such as estrone 3-sulfate and dehydroepiandrosterone 3-sulfate, therefore playing a role in the enterohepatic circulation of sterols. Able to transport eicosanoids such as prostaglandin E2. The protein is Organic solute transporter subunit alpha (SLC51A) of Homo sapiens (Human).